A 205-amino-acid polypeptide reads, in one-letter code: Adenylate kinase (205 aa).

11–16 (GSGKGT) lines the ATP pocket. Positions 31-60 (STGDIFRHNVKSMTPLGVEAKRYIDNGDFV) are NMP. Residues Thr-32, Arg-37, 58 to 60 (DFV), 86 to 89 (GYPR), and Gln-93 each bind AMP. Positions 127–137 (KRAEIEGRADD) are LID. Arg-128 provides a ligand contact to ATP. Residues Arg-134 and Arg-145 each coordinate AMP. Gly-173 contributes to the ATP binding site.

This sequence belongs to the adenylate kinase family. Monomer.

The protein localises to the cytoplasm. The enzyme catalyses AMP + ATP = 2 ADP. Its pathway is purine metabolism; AMP biosynthesis via salvage pathway; AMP from ADP: step 1/1. Catalyzes the reversible transfer of the terminal phosphate group between ATP and AMP. Plays an important role in cellular energy homeostasis and in adenine nucleotide metabolism. This is Adenylate kinase from Micrococcus luteus (strain ATCC 4698 / DSM 20030 / JCM 1464 / CCM 169 / CCUG 5858 / IAM 1056 / NBRC 3333 / NCIMB 9278 / NCTC 2665 / VKM Ac-2230) (Micrococcus lysodeikticus).